Here is a 514-residue protein sequence, read N- to C-terminus: FAD-dependent monooxygenase AacuC (514 aa).

The segment at 1–29 (MVSNEYLTHGDKDEFDPAKWSSTPGELPP) is disordered. The segment covering 8–17 (THGDKDEFDP) has biased composition (basic and acidic residues). Positions 79 and 146 each coordinate FAD. Arginine 227 is an active-site residue. Residues aspartate 358 and glycine 371 each coordinate FAD.

It belongs to the paxM FAD-dependent monooxygenase family. It depends on FAD as a cofactor.

It participates in secondary metabolite biosynthesis. Its function is as follows. FAD-dependent monooxygenase; part of the gene cluster that mediates the biosynthesis of the tetrahydroxanthone dimer secalonic acid D. The pathway begins with the synthesis of atrochrysone thioester by the polyketide synthase AacuL. The atrochrysone carboxyl ACP thioesterase AacuM then breaks the thioester bond and releases the atrochrysone carboxylic acid from AacuL. Atrochrysone carboxylic acid is decarboxylated by the decarboxylase AacuI, and oxidized by the anthrone oxygenase AacuG to yield emodin. Emodin is then reduced to emodin hydroquinone by a yet unidentified oxidoreductase. A-ring reduction by the short chain dehydrogenase AacuN, dehydration by the scytalone dehydratase-like protein AacuK and probable spontaneous re-oxidation, results in overall deoxygenation to chrysophanol. Baeyer-Villiger oxidation by the Baeyer-Villiger monooxygenase (BVMO) AacuH then yields monodictyphenone. Monodictyphenone is transformed into compounds with the tetrahydroxanthone skeleton via methylesterification by the methyltransferase AacuQ, followed by the action of the flavin-dependent monooxygenase AacuC, the isomerase AacuP, and the short chain dehydrogenase/reductase AacuF or AacuD. AacuF and AacuD should accept the same compound as a substrate but perform the ketoreduction with a different stereoselectivity, thus yielding blennolides B and A, respectively. In the final step of the biosynthesis, the cytochrome P450 monooxygenase AacuE accepts blennolide B and/or blennolide A to conduct the dimerization reaction to furnish the tetrahydroxanthone dimers, secalonic acids D, B, and F. This is FAD-dependent monooxygenase AacuC from Aspergillus aculeatus (strain ATCC 16872 / CBS 172.66 / WB 5094).